The following is a 1013-amino-acid chain: Sodium/potassium-transporting ATPase subunit alpha-3 (1013 aa).

Residues 1-24 (MGDKKDDKDSPKKNKGKERRDLDD) are disordered. Residues 1–77 (MGDKKDDKDS…NALTPPPTTP (77 aa)) are Cytoplasmic-facing. 2 positions are modified to phosphoserine: Ser-37 and Ser-56. The interaction with phosphoinositide-3 kinase stretch occupies residues 72–74 (PPP). The helical transmembrane segment at 78–98 (EWVKFCRQLFGGFSILLWIGA) threads the bilayer. Topologically, residues 99–121 (ILCFLAYGIQAGTEDDPSGDNLY) are extracellular. Residues 122–142 (LGIVLAAVVIITGCFSYYQEA) traverse the membrane as a helical segment. The Cytoplasmic portion of the chain corresponds to 143–278 (KSSKIMESFK…VGKTPIAIEI (136 aa)). 2 positions are modified to phosphoserine: Ser-218 and Ser-265. A helical transmembrane segment spans residues 279–298 (EHFIQLITGVAVFLGVSFFI). The Extracellular portion of the chain corresponds to 299-310 (LSLILGYTWLEA). Residues 311–328 (VIFLIGIIVANVPEGLLA) traverse the membrane as a helical segment. Topologically, residues 329–762 (TVTVCLTLTA…EEGRLIFDNL (434 aa)) are cytoplasmic. Asp-366 serves as the catalytic 4-aspartylphosphate intermediate. Residue Ser-442 is modified to Phosphoserine. Tyr-548 carries the phosphotyrosine modification. Residues Asp-707 and Asp-711 each coordinate Mg(2+). A helical transmembrane segment spans residues 763-782 (KKSIAYTLTSNIPEITPFLL). Residues 783–792 (FIMANIPLPL) are Extracellular-facing. The helical transmembrane segment at 793–813 (GTITILCIDLGTDMVPAISLA) threads the bilayer. The Cytoplasmic segment spans residues 814–833 (YEAAESDIMKRQPRNPRTDK). Residues 834–856 (LVNERLISMAYGQIGMIQALGGF) traverse the membrane as a helical segment. The Extracellular segment spans residues 857 to 908 (FSYFVILAENGFLPGNLVGIRLNWDDRTVNDLEDSYGQQWTYEQRKVVEFTC). The chain crosses the membrane as a helical span at residues 909-928 (HTAFFVSIVVVQWADLIICK). Topologically, residues 929-941 (TRRNSVFQQGMKN) are cytoplasmic. Ser-933 bears the Phosphoserine; by PKA mark. The chain crosses the membrane as a helical span at residues 942–960 (KILIFGLFEETALAAFLSY). Topologically, residues 961–975 (CPGMDVALRMYPLKP) are extracellular. Residues 976-996 (SWWFCAFPYSFLIFVYDEIRK) form a helical membrane-spanning segment. The Cytoplasmic portion of the chain corresponds to 997-1013 (LILRRNPGGWVEKETYY).

Belongs to the cation transport ATPase (P-type) (TC 3.A.3) family. Type IIC subfamily. The sodium/potassium-transporting ATPase is composed of a catalytic alpha subunit, an auxiliary non-catalytic beta subunit and an additional regulatory subunit. Interacts with regulatory subunit FXYD1.

It is found in the cell membrane. It carries out the reaction K(+)(out) + Na(+)(in) + ATP + H2O = K(+)(in) + Na(+)(out) + ADP + phosphate + H(+). Its function is as follows. This is the catalytic component of the active enzyme, which catalyzes the hydrolysis of ATP coupled with the exchange of sodium and potassium ions across the plasma membrane. This action creates the electrochemical gradient of sodium and potassium ions, providing the energy for active transport of various nutrients. The sequence is that of Sodium/potassium-transporting ATPase subunit alpha-3 (ATP1A3) from Homo sapiens (Human).